A 281-amino-acid polypeptide reads, in one-letter code: N-methyltransferase tcpN (281 aa).

This sequence belongs to the methyltransferase superfamily. LaeA methyltransferase family.

It participates in secondary metabolite biosynthesis. Its function is as follows. N-methyltransferase; part of the gene cluster that mediates the biosynthesis of an unusual class of epipolythiodioxopiperazines (ETPs) lacking the reactive thiol group important for toxicity. Firstly, L-tyrosine is prenylated by tcpD, before undergoing condensation with L-glycine in a reaction catalyzed by the NRPS tcpP leading to the diketopiperazine (DKP) backbone. Afterwards the alpha-carbon of tyrosine is oxidized by the cytochrome P450 tcpC to form a hydroxyl group. However, in contrast other ETP biosynthesis pathways studied so far, tcpC is not able to bishydroxylate the DKP at both alpha-carbon positions, but hydroxylates the alpha-carbon of the tyrosine part and the nitrogen of the glycine part. The next steps involve an alpha,beta-elimination reaction catalyzed by tcpI, a methylation by the methyltransferase tcpN the action of the four enzyme cascade tcpG/K/J/I. Due to a dysfunctional cytochrome P450 monooxygenase tcpC, the pathway leads to the biosynthesis of probable non-toxic metabolites lacking the reactive thiol group. This Claviceps purpurea (strain 20.1) (Ergot fungus) protein is N-methyltransferase tcpN.